Consider the following 127-residue polypeptide: Putative platinum sensitivity protein 1 (127 aa).

This Saccharomyces cerevisiae (strain ATCC 204508 / S288c) (Baker's yeast) protein is Putative platinum sensitivity protein 1 (PSY1).